Consider the following 613-residue polypeptide: 4-hydroxy-3-methylbut-2-en-1-yl diphosphate synthase (flavodoxin) (613 aa).

[4Fe-4S] cluster contacts are provided by cysteine 514, cysteine 517, cysteine 548, and glutamate 555.

This sequence belongs to the IspG family. The cofactor is [4Fe-4S] cluster.

It catalyses the reaction (2E)-4-hydroxy-3-methylbut-2-enyl diphosphate + oxidized [flavodoxin] + H2O + 2 H(+) = 2-C-methyl-D-erythritol 2,4-cyclic diphosphate + reduced [flavodoxin]. The protein operates within isoprenoid biosynthesis; isopentenyl diphosphate biosynthesis via DXP pathway; isopentenyl diphosphate from 1-deoxy-D-xylulose 5-phosphate: step 5/6. Its function is as follows. Converts 2C-methyl-D-erythritol 2,4-cyclodiphosphate (ME-2,4cPP) into 1-hydroxy-2-methyl-2-(E)-butenyl 4-diphosphate. In Chlamydia pneumoniae (Chlamydophila pneumoniae), this protein is 4-hydroxy-3-methylbut-2-en-1-yl diphosphate synthase (flavodoxin).